Reading from the N-terminus, the 380-residue chain is Cytochrome b (380 aa).

4 helical membrane-spanning segments follow: residues F34–M54, W78–I99, W114–L134, and F179–T199. Positions 84 and 98 each coordinate heme b. H183 and H197 together coordinate heme b. Residue H202 coordinates a ubiquinone. The next 4 helical transmembrane spans lie at L227–S247, L289–H309, L321–S341, and F348–P368.

The protein belongs to the cytochrome b family. In terms of assembly, the cytochrome bc1 complex contains 11 subunits: 3 respiratory subunits (MT-CYB, CYC1 and UQCRFS1), 2 core proteins (UQCRC1 and UQCRC2) and 6 low-molecular weight proteins (UQCRH/QCR6, UQCRB/QCR7, UQCRQ/QCR8, UQCR10/QCR9, UQCR11/QCR10 and a cleavage product of UQCRFS1). This cytochrome bc1 complex then forms a dimer. Heme b is required as a cofactor.

The protein localises to the mitochondrion inner membrane. Its function is as follows. Component of the ubiquinol-cytochrome c reductase complex (complex III or cytochrome b-c1 complex) that is part of the mitochondrial respiratory chain. The b-c1 complex mediates electron transfer from ubiquinol to cytochrome c. Contributes to the generation of a proton gradient across the mitochondrial membrane that is then used for ATP synthesis. This Procellaria westlandica (Westland petrel) protein is Cytochrome b (MT-CYB).